Consider the following 369-residue polypeptide: Anthranilate phosphoribosyltransferase (369 aa).

5-phospho-alpha-D-ribose 1-diphosphate is bound by residues Gly111, 114 to 115 (GD), Thr119, 121 to 124 (NIST), 139 to 147 (KHGNRGVSS), and Ser151. Residue Gly111 participates in anthranilate binding. Ser123 lines the Mg(2+) pocket. Asn142 serves as a coordination point for anthranilate. An anthranilate-binding site is contributed by Arg197. Mg(2+) is bound by residues Asp256 and Glu257.

It belongs to the anthranilate phosphoribosyltransferase family. As to quaternary structure, homodimer. The cofactor is Mg(2+).

It catalyses the reaction N-(5-phospho-beta-D-ribosyl)anthranilate + diphosphate = 5-phospho-alpha-D-ribose 1-diphosphate + anthranilate. Its pathway is amino-acid biosynthesis; L-tryptophan biosynthesis; L-tryptophan from chorismate: step 2/5. Its function is as follows. Catalyzes the transfer of the phosphoribosyl group of 5-phosphorylribose-1-pyrophosphate (PRPP) to anthranilate to yield N-(5'-phosphoribosyl)-anthranilate (PRA). The polypeptide is Anthranilate phosphoribosyltransferase (Cupriavidus pinatubonensis (strain JMP 134 / LMG 1197) (Cupriavidus necator (strain JMP 134))).